A 752-amino-acid chain; its full sequence is Mitochondrial Rho GTPase 1 (752 aa).

The Cytoplasmic segment spans residues 1 to 671 (MRKDVRIVLA…RNALSYGTNR (671 aa)). Residues 2–170 (RKDVRIVLAG…FYFAQKAVLY (169 aa)) enclose the Miro 1 domain. GTP-binding positions include 11–18 (GDPDVGKS), 57–61 (DTSSS), and 115–118 (NKID). EF-hand domains follow at residues 186 to 221 (ACVD…CFDT) and 333 to 368 (NGYQ…APDN). Residues Asp199, Asp201, Asp203, Glu210, Asp346, Asp348, Asp350, and Glu357 each contribute to the Ca(2+) site. Residues 426–460 (SSGSASTPAPIPLTPTGPPGSRPSRNRTPCPPSTI) form a disordered region. The span at 434–446 (APIPLTPTGPPGS) shows a compositional bias: pro residues. The Miro 2 domain occupies 481 to 651 (RSVFLGFVLG…YGLICTIAVD (171 aa)). GTP-binding positions include 490 to 497 (GAAGSGKT), 526 to 530 (EQAGA), and 595 to 598 (TKAD). Residues 672–692 (WQFWGYIGLVVIGGGGAVWIC) form a helical; Anchor for type IV membrane protein membrane-spanning segment. At 693–752 (AKVLKVPIGSTLGFGSSASTTSWWLSGAQARGAGGPNATKVSSWFDWIRWQSSSNVRSEL) the chain is on the mitochondrial intermembrane side.

Belongs to the mitochondrial Rho GTPase family.

The protein localises to the mitochondrion outer membrane. Its function is as follows. Mitochondrial GTPase involved in mitochondrial trafficking. Probably involved in control of anterograde transport of mitochondria and their subcellular distribution. The protein is Mitochondrial Rho GTPase 1 (GEM1) of Mycosarcoma maydis (Corn smut fungus).